Here is a 187-residue protein sequence, read N- to C-terminus: Elongation factor P (187 aa).

It belongs to the elongation factor P family.

The protein localises to the cytoplasm. It functions in the pathway protein biosynthesis; polypeptide chain elongation. Involved in peptide bond synthesis. Stimulates efficient translation and peptide-bond synthesis on native or reconstituted 70S ribosomes in vitro. Probably functions indirectly by altering the affinity of the ribosome for aminoacyl-tRNA, thus increasing their reactivity as acceptors for peptidyl transferase. The protein is Elongation factor P of Prochlorococcus marinus (strain NATL2A).